We begin with the raw amino-acid sequence, 437 residues long: Epsilon-sarcoglycan (437 aa).

Residues 1–317 (MQLPRWWELG…LKSRDYYTDF (317 aa)) lie on the Extracellular side of the membrane. Residue asparagine 200 is glycosylated (N-linked (GlcNAc...) asparagine). A helical transmembrane segment spans residues 318–338 (LITLAVPSAVALVLFLILAYI). The Cytoplasmic segment spans residues 339–437 (MCCRREGVEK…QQQTTGKWYP (99 aa)).

This sequence belongs to the sarcoglycan alpha/epsilon family. In terms of processing, N-glycosylated. Ubiquitinated, leading to its degradation by the proteasome. In terms of tissue distribution, ubiquitous.

The protein resides in the cell membrane. It is found in the sarcolemma. Its subcellular location is the cytoplasm. The protein localises to the cytoskeleton. It localises to the cell projection. The protein resides in the dendrite. It is found in the golgi apparatus. In terms of biological role, component of the sarcoglycan complex, a subcomplex of the dystrophin-glycoprotein complex which forms a link between the F-actin cytoskeleton and the extracellular matrix. In Homo sapiens (Human), this protein is Epsilon-sarcoglycan (SGCE).